The following is a 287-amino-acid chain: Large ribosomal subunit protein uL2 (287 aa).

Residues 221–287 (RGSVMNPCDH…SKRSRGGRDS (67 aa)) are disordered. Basic residues predominate over residues 258 to 287 (KTRKKNKPSNKLVVRRRRRISKRSRGGRDS).

It belongs to the universal ribosomal protein uL2 family. As to quaternary structure, part of the 50S ribosomal subunit. Forms a bridge to the 30S subunit in the 70S ribosome.

In terms of biological role, one of the primary rRNA binding proteins. Required for association of the 30S and 50S subunits to form the 70S ribosome, for tRNA binding and peptide bond formation. It has been suggested to have peptidyltransferase activity; this is somewhat controversial. Makes several contacts with the 16S rRNA in the 70S ribosome. The chain is Large ribosomal subunit protein uL2 from Prochlorococcus marinus (strain MIT 9301).